Consider the following 307-residue polypeptide: 4-diphosphocytidyl-2-C-methyl-D-erythritol kinase (307 aa).

The active site involves lysine 9. Position 94-104 (94-104 (PIGAGLAGGSS)) interacts with ATP. Residue aspartate 136 is part of the active site.

The protein belongs to the GHMP kinase family. IspE subfamily.

It catalyses the reaction 4-CDP-2-C-methyl-D-erythritol + ATP = 4-CDP-2-C-methyl-D-erythritol 2-phosphate + ADP + H(+). Its pathway is isoprenoid biosynthesis; isopentenyl diphosphate biosynthesis via DXP pathway; isopentenyl diphosphate from 1-deoxy-D-xylulose 5-phosphate: step 3/6. In terms of biological role, catalyzes the phosphorylation of the position 2 hydroxy group of 4-diphosphocytidyl-2C-methyl-D-erythritol. The chain is 4-diphosphocytidyl-2-C-methyl-D-erythritol kinase from Synechococcus sp. (strain CC9902).